A 429-amino-acid chain; its full sequence is Glutamate-1-semialdehyde 2,1-aminomutase (429 aa).

N6-(pyridoxal phosphate)lysine is present on lysine 268.

Belongs to the class-III pyridoxal-phosphate-dependent aminotransferase family. HemL subfamily. Homodimer. Requires pyridoxal 5'-phosphate as cofactor.

Its subcellular location is the cytoplasm. It catalyses the reaction (S)-4-amino-5-oxopentanoate = 5-aminolevulinate. It participates in porphyrin-containing compound metabolism; protoporphyrin-IX biosynthesis; 5-aminolevulinate from L-glutamyl-tRNA(Glu): step 2/2. In Serratia proteamaculans (strain 568), this protein is Glutamate-1-semialdehyde 2,1-aminomutase.